We begin with the raw amino-acid sequence, 193 residues long: Protein TEX261 (193 aa).

5 consecutive transmembrane segments (helical) span residues Met-1–Ala-21, Ser-39–Phe-59, Ile-67–Ile-87, Phe-94–Glu-114, and Val-122–Ser-142.

The protein belongs to the SVP26 family.

It is found in the membrane. The sequence is that of Protein TEX261 (TEX261) from Bos taurus (Bovine).